The chain runs to 431 residues: Na(+)-translocating NADH-quinone reductase subunit F (431 aa).

The helical transmembrane segment at 10–30 (IFVASAAFCSLGLILVAVILL) threads the bilayer. Residues 41–133 (CKLKINNDDS…DLCLEVEERY (93 aa)) enclose the 2Fe-2S ferredoxin-type domain. [2Fe-2S] cluster is bound by residues Cys-76, Cys-82, Cys-85, and Cys-117. The region spanning 136 to 286 (ASSWEGTVVS…SGPYGESFMK (151 aa)) is the FAD-binding FR-type domain. Positions 289–413 (NRPVIFLIGG…ALHNSSILTL (125 aa)) are catalytic.

It belongs to the NqrF family. In terms of assembly, composed of six subunits; NqrA, NqrB, NqrC, NqrD, NqrE and NqrF. [2Fe-2S] cluster serves as cofactor. FAD is required as a cofactor.

It is found in the cell inner membrane. The catalysed reaction is a ubiquinone + n Na(+)(in) + NADH + H(+) = a ubiquinol + n Na(+)(out) + NAD(+). In terms of biological role, NQR complex catalyzes the reduction of ubiquinone-1 to ubiquinol by two successive reactions, coupled with the transport of Na(+) ions from the cytoplasm to the periplasm. The first step is catalyzed by NqrF, which accepts electrons from NADH and reduces ubiquinone-1 to ubisemiquinone by a one-electron transfer pathway. The chain is Na(+)-translocating NADH-quinone reductase subunit F from Chlamydia trachomatis serovar D (strain ATCC VR-885 / DSM 19411 / UW-3/Cx).